The sequence spans 270 residues: Maximins-S type D (270 aa).

The first 18 residues, 1–18, serve as a signal peptide directing secretion; the sequence is MNFNYFILVLFFITSGHA. 2 consecutive propeptides follow at residues 19–35 and 52–65; these read KSETREVHQEAENHIKR and SAEEQNLAEHLVTR. The residue at position 83 (N83) is an Asparagine amide. A propeptide spanning residues 87–100 is cleaved from the precursor; sequence SAEEQDLAEDLVTR. K118 carries the post-translational modification Lysine amide. Residues 122–135 constitute a propeptide that is removed on maturation; sequence SAEDQDLAEDLVTR. N153 bears the Asparagine amide mark. The propeptide occupies 157-170; sequence SAEEQDLAEHLVTR. N188 carries the post-translational modification Asparagine amide. Positions 192–205 are excised as a propeptide; that stretch reads SAEEQDLVEDLVTR. K223 carries the lysine amide modification. A propeptide spanning residues 227-240 is cleaved from the precursor; sequence SAEEQDLAEDLVTR. A Lysine amide modification is found at K258. Positions 262-270 are excised as a propeptide; that stretch reads SAEQEKDMK.

The protein belongs to the maximin-S family. Expressed by the skin dorsal glands.

The protein resides in the secreted. Functionally, maximin-S1 has no antimicrobial activity. Has no hemolytic activity. Maximin-S2 has an activity against mycoplasma but has no activity against common Gram-positive and Gram-negative bacteria nor fungi. Has no hemolytic activity. Its function is as follows. Maximin-S3 has an activity against mycoplasma but has no activity against common Gram-positive and Gram-negative bacteria nor fungi. Has no hemolytic activity. In terms of biological role, maximin-S4 has an activity against mycoplasma but has no activity against common Gram-positive and Gram-negative bacteria nor fungi. Has no hemolytic activity. Functionally, maximin-S5 has an activity against mycoplasma but has no activity against common Gram-positive and Gram-negative bacteria nor fungi. Has no hemolytic activity. The polypeptide is Maximins-S type D (Bombina maxima (Giant fire-bellied toad)).